A 185-amino-acid chain; its full sequence is Ribosome-recycling factor (185 aa).

It belongs to the RRF family.

The protein localises to the cytoplasm. Responsible for the release of ribosomes from messenger RNA at the termination of protein biosynthesis. May increase the efficiency of translation by recycling ribosomes from one round of translation to another. This is Ribosome-recycling factor from Yersinia pseudotuberculosis serotype O:1b (strain IP 31758).